The primary structure comprises 106 residues: Class II hydrophobin 6 (106 aa).

The N-terminal stretch at 1 to 16 (MQFFTVATLFLATAFA) is a signal peptide. 4 disulfide bridges follow: Cys-36–Cys-86, Cys-47–Cys-77, Cys-48–Cys-60, and Cys-87–Cys-98.

It belongs to the cerato-ulmin hydrophobin family. Homodimer. Homodimers further self-assemble to form highly ordered films at water-air interfaces through intermolecular interactions.

The protein localises to the secreted. Its subcellular location is the cell wall. Its function is as follows. Aerial growth, conidiation, and dispersal of filamentous fungi in the environment rely upon a capability of their secreting small amphipathic proteins called hydrophobins (HPBs) with low sequence identity. Class I can self-assemble into an outermost layer of rodlet bundles on aerial cell surfaces, conferring cellular hydrophobicity that supports fungal growth, development and dispersal; whereas Class II form highly ordered films at water-air interfaces through intermolecular interactions but contribute nothing to the rodlet structure. HFB2-6 is a class II hydrophobin that has a function in root colonization. Acts as an effector in poplar by up-regulating the expression of genes related to both the jasmonic acid and salicylic acid signal transduction pathways, which not only causes induced systemic resistance (ISR), but also systemic acquired resistance (SAR), giving poplar broad-spectrum resistance to pathogens. Also induces genes related to auxin signal transduction to promote poplar growth. Plays roles in interactions with both biotic and abiotic environmental conditions such as the presence of the pathogen Alternaria alternata or nutrient starvation conditions. This is Class II hydrophobin 6 from Trichoderma asperellum (strain ATCC 204424 / CBS 433.97 / NBRC 101777).